Consider the following 102-residue polypeptide: UPF0058 protein MTH_224 (102 aa).

It belongs to the UPF0058 family.

The chain is UPF0058 protein MTH_224 from Methanothermobacter thermautotrophicus (strain ATCC 29096 / DSM 1053 / JCM 10044 / NBRC 100330 / Delta H) (Methanobacterium thermoautotrophicum).